A 167-amino-acid chain; its full sequence is Transcriptional repressor NrdR (167 aa).

A zinc finger lies at 3 to 34 (CPFCRNPDSRVVDSRMADDGSAIRRRRQCPEC). One can recognise an ATP-cone domain in the interval 46 to 136 (LSVIKRSGVG…VYQAFESLED (91 aa)). Positions 148-167 (AQEDAAERPATPRKPEKTSL) are disordered.

The protein belongs to the NrdR family. It depends on Zn(2+) as a cofactor.

In terms of biological role, negatively regulates transcription of bacterial ribonucleotide reductase nrd genes and operons by binding to NrdR-boxes. This is Transcriptional repressor NrdR from Pseudarthrobacter chlorophenolicus (strain ATCC 700700 / DSM 12829 / CIP 107037 / JCM 12360 / KCTC 9906 / NCIMB 13794 / A6) (Arthrobacter chlorophenolicus).